The chain runs to 182 residues: Putative pre-16S rRNA nuclease (182 aa).

This sequence belongs to the YqgF nuclease family.

Its subcellular location is the cytoplasm. Could be a nuclease involved in processing of the 5'-end of pre-16S rRNA. The sequence is that of Putative pre-16S rRNA nuclease from Corynebacterium aurimucosum (strain ATCC 700975 / DSM 44827 / CIP 107346 / CN-1) (Corynebacterium nigricans).